Consider the following 342-residue polypeptide: Tetraacyldisaccharide 4'-kinase (342 aa).

Residue 56–63 (TAGGAGKT) participates in ATP binding.

Belongs to the LpxK family.

The catalysed reaction is a lipid A disaccharide + ATP = a lipid IVA + ADP + H(+). It functions in the pathway glycolipid biosynthesis; lipid IV(A) biosynthesis; lipid IV(A) from (3R)-3-hydroxytetradecanoyl-[acyl-carrier-protein] and UDP-N-acetyl-alpha-D-glucosamine: step 6/6. Its function is as follows. Transfers the gamma-phosphate of ATP to the 4'-position of a tetraacyldisaccharide 1-phosphate intermediate (termed DS-1-P) to form tetraacyldisaccharide 1,4'-bis-phosphate (lipid IVA). This Parvibaculum lavamentivorans (strain DS-1 / DSM 13023 / NCIMB 13966) protein is Tetraacyldisaccharide 4'-kinase.